A 355-amino-acid polypeptide reads, in one-letter code: Alanine racemase (355 aa).

Lysine 34 acts as the Proton acceptor; specific for D-alanine in catalysis. Lysine 34 is modified (N6-(pyridoxal phosphate)lysine). Arginine 133 lines the substrate pocket. Tyrosine 249 functions as the Proton acceptor; specific for L-alanine in the catalytic mechanism. Position 297 (methionine 297) interacts with substrate.

It belongs to the alanine racemase family. The cofactor is pyridoxal 5'-phosphate.

The enzyme catalyses L-alanine = D-alanine. The protein operates within amino-acid biosynthesis; D-alanine biosynthesis; D-alanine from L-alanine: step 1/1. Functionally, catalyzes the interconversion of L-alanine and D-alanine. May also act on other amino acids. This is Alanine racemase (alr) from Rickettsia peacockii (strain Rustic).